The chain runs to 785 residues: Conserved oligomeric Golgi complex subunit 4 (785 aa).

The disordered stretch occupies residues 1–24 (MAEVESPLKLSGAPPPPEGVGGGH). Ala2 is modified (N-acetylalanine). Residues 2–84 (AEVESPLKLS…VTLHRMGPSL (83 aa)) are interaction with SCFD1. Ser6 is modified (phosphoserine). Residues 85 to 153 (QLIEGDAKQL…TALRNEDYEQ (69 aa)) are interaction with STX5. The interval 618-740 (PQVQPWINTF…SQMATILNLE (123 aa)) is d domain. Residues 741-785 (RVTEILDYWGANSGPLTWRLTPAEVRQVLALRIDFRNEDIKRLRL) form an e domain; essential for proper cell surface glycosylation region.

Belongs to the COG4 family. As to quaternary structure, monomer. Component of the conserved oligomeric Golgi (COG) complex which is composed of eight different subunits and is required for normal Golgi morphology and localization. Mediates interaction of SCFD1 with the COG complex. Interacts with STX5.

The protein localises to the cytoplasm. It localises to the cytosol. Its subcellular location is the golgi apparatus membrane. Its function is as follows. Required for normal Golgi function. Plays a role in SNARE-pin assembly and Golgi-to-ER retrograde transport via its interaction with SCFD1. This chain is Conserved oligomeric Golgi complex subunit 4 (Cog4), found in Mus musculus (Mouse).